A 1062-amino-acid chain; its full sequence is Carbamoyl phosphate synthase large chain (1062 aa).

The interval 1–401 is carboxyphosphate synthetic domain; that stretch reads MPKRTDIHKI…AMQKAVRSLE (401 aa). ATP contacts are provided by R129, R169, G175, G176, K208, I210, E215, G241, I242, H243, Q284, and E298. The 195-residue stretch at 133-327 folds into the ATP-grasp 1 domain; that stretch reads KELCKELGEP…IAKMAAKIAI (195 aa). Mg(2+)-binding residues include Q284, E298, and N300. The Mn(2+) site is built by Q284, E298, and N300. The oligomerization domain stretch occupies residues 402–546; the sequence is IDEKDLYSET…YSTYDGENES (145 aa). Residues 547–929 form a carbamoyl phosphate synthetic domain region; it reads HKSGKKSVIV…ALYKAFAGAK (383 aa). In terms of domain architecture, ATP-grasp 2 spans 671–861; that stretch reads DQIIKKLKLN…MAQVATRVIM (191 aa). ATP is bound by residues R707, D746, L748, E752, G777, V778, H779, S780, Q820, and E832. The Mg(2+) site is built by Q820, E832, and N834. Mn(2+)-binding residues include Q820, E832, and N834. Residues 930-1062 enclose the MGS-like domain; the sequence is MQLPENGNVL…NRSFATDALK (133 aa). The segment at 930–1062 is allosteric domain; it reads MQLPENGNVL…NRSFATDALK (133 aa).

The protein belongs to the CarB family. As to quaternary structure, composed of two chains; the small (or glutamine) chain promotes the hydrolysis of glutamine to ammonia, which is used by the large (or ammonia) chain to synthesize carbamoyl phosphate. Tetramer of heterodimers (alpha,beta)4. It depends on Mg(2+) as a cofactor. Mn(2+) is required as a cofactor.

The catalysed reaction is hydrogencarbonate + L-glutamine + 2 ATP + H2O = carbamoyl phosphate + L-glutamate + 2 ADP + phosphate + 2 H(+). It catalyses the reaction hydrogencarbonate + NH4(+) + 2 ATP = carbamoyl phosphate + 2 ADP + phosphate + 2 H(+). It participates in amino-acid biosynthesis; L-arginine biosynthesis; carbamoyl phosphate from bicarbonate: step 1/1. The protein operates within pyrimidine metabolism; UMP biosynthesis via de novo pathway; (S)-dihydroorotate from bicarbonate: step 1/3. Large subunit of the glutamine-dependent carbamoyl phosphate synthetase (CPSase). CPSase catalyzes the formation of carbamoyl phosphate from the ammonia moiety of glutamine, carbonate, and phosphate donated by ATP, constituting the first step of 2 biosynthetic pathways, one leading to arginine and/or urea and the other to pyrimidine nucleotides. The large subunit (synthetase) binds the substrates ammonia (free or transferred from glutamine from the small subunit), hydrogencarbonate and ATP and carries out an ATP-coupled ligase reaction, activating hydrogencarbonate by forming carboxy phosphate which reacts with ammonia to form carbamoyl phosphate. The protein is Carbamoyl phosphate synthase large chain of Lactobacillus johnsonii (strain CNCM I-12250 / La1 / NCC 533).